A 123-amino-acid chain; its full sequence is Protein Wnt-7a (123 aa).

Serine 1 is lipidated: O-palmitoleoyl serine; by PORCN. The disordered linker stretch occupies residues 33 to 61 (VEPVRTHRNKRPVFLKIKKPLSYRKPMVT). Cysteines 89 and 104 form a disulfide. N-linked (GlcNAc...) asparagine glycans are attached at residues asparagine 90 and asparagine 96.

This sequence belongs to the Wnt family. In terms of assembly, forms a soluble 1:1 complex with AFM; this prevents oligomerization and is required for prolonged biological activity. The complex with AFM may represent the physiological form in body fluids. Interacts with FZD5. Interacts with PORCN. Palmitoleoylation is required for efficient binding to frizzled receptors. Depalmitoleoylation leads to Wnt signaling pathway inhibition.

Its subcellular location is the secreted. It is found in the extracellular space. The protein localises to the extracellular matrix. Functionally, ligand for members of the frizzled family of seven transmembrane receptors that functions in the canonical Wnt/beta-catenin signaling pathway. Plays an important role in embryonic development, including dorsal versus ventral patterning during limb development, skeleton development and urogenital tract development. Required for central nervous system (CNS) angiogenesis and blood-brain barrier regulation. In Alopias vulpinus (Common thresher shark), this protein is Protein Wnt-7a (WNT-7A).